A 298-amino-acid chain; its full sequence is 4-hydroxy-tetrahydrodipicolinate synthase (298 aa).

Thr-51 serves as a coordination point for pyruvate. The active-site Proton donor/acceptor is the Tyr-139. The active-site Schiff-base intermediate with substrate is Lys-167. Ile-209 lines the pyruvate pocket.

Belongs to the DapA family. In terms of assembly, homotetramer; dimer of dimers.

It localises to the cytoplasm. The enzyme catalyses L-aspartate 4-semialdehyde + pyruvate = (2S,4S)-4-hydroxy-2,3,4,5-tetrahydrodipicolinate + H2O + H(+). It participates in amino-acid biosynthesis; L-lysine biosynthesis via DAP pathway; (S)-tetrahydrodipicolinate from L-aspartate: step 3/4. Functionally, catalyzes the condensation of (S)-aspartate-beta-semialdehyde [(S)-ASA] and pyruvate to 4-hydroxy-tetrahydrodipicolinate (HTPA). In Haemophilus influenzae (strain PittEE), this protein is 4-hydroxy-tetrahydrodipicolinate synthase.